The sequence spans 715 residues: Polyribonucleotide nucleotidyltransferase (715 aa).

Mg(2+) contacts are provided by Asp490 and Asp496. Positions 557 to 616 constitute a KH domain; the sequence is PRIETMTIPTDKIREVIGSGGKVIREIVETSGAKVDISDDGTIKIASANADSIKKAYDMI. One can recognise an S1 motif domain in the interval 626–694; it reads GKIYVGKVVK…DRGKVRLGMK (69 aa).

This sequence belongs to the polyribonucleotide nucleotidyltransferase family. Mg(2+) serves as cofactor.

The protein localises to the cytoplasm. It carries out the reaction RNA(n+1) + phosphate = RNA(n) + a ribonucleoside 5'-diphosphate. In terms of biological role, involved in mRNA degradation. Catalyzes the phosphorolysis of single-stranded polyribonucleotides processively in the 3'- to 5'-direction. This is Polyribonucleotide nucleotidyltransferase from Paracoccus denitrificans (strain Pd 1222).